Reading from the N-terminus, the 166-residue chain is Phospholipase A2 inhibitor A4/A5 (166 aa).

Residues 1–19 form the signal peptide; the sequence is MRLILLSGLLLLGTFLVNG. Residues 46–161 form the C-type lectin domain; sequence LFHAFLTVHK…CDDNLLVVCE (116 aa). 2 cysteine pairs are disulfide-bonded: cysteine 83/cysteine 160 and cysteine 138/cysteine 152. Asparagine 122 carries N-linked (GlcNAc...) asparagine glycosylation.

This sequence belongs to the alpha-type phospholipase A2 inhibitor family. In terms of assembly, homotrimer; non-covalently linked. As to expression, expressed by the liver.

It is found in the secreted. In terms of biological role, this phospholipase A2 inhibitor binds directly phospholipase A2 in the presence or absence of calcium. The polypeptide is Phospholipase A2 inhibitor A4/A5 (Crotalus durissus terrificus (South American rattlesnake)).